Here is a 344-residue protein sequence, read N- to C-terminus: 4-hydroxy-2-oxovalerate aldolase (344 aa).

One can recognise a Pyruvate carboxyltransferase domain in the interval 8-260 (VTLHDMSLRD…NHGIDLYKIM (253 aa)). Position 16-17 (16-17 (RD)) interacts with substrate. Aspartate 17 serves as a coordination point for Mn(2+). The active-site Proton acceptor is the histidine 20. 2 residues coordinate substrate: serine 170 and histidine 199. Histidine 199 and histidine 201 together coordinate Mn(2+). A substrate-binding site is contributed by tyrosine 290.

It belongs to the 4-hydroxy-2-oxovalerate aldolase family.

The enzyme catalyses (S)-4-hydroxy-2-oxopentanoate = acetaldehyde + pyruvate. This Pseudoalteromonas translucida (strain TAC 125) protein is 4-hydroxy-2-oxovalerate aldolase (mhpE).